The chain runs to 436 residues: MERLVIEGGTVLPMTGQADVYENGVVLVEAGRIVYAGPRDGAPHLAGARRIDASGRIVMPGIVNTHCHAAMTLLRGYADDMRLMEWLQTKIWPAEARMTADDVYWGTALGAYEMLSGGITTFLDMYFPADAVARAIQDTGIRGIVARGIIGVGGPSEALSRLDESREAFHRWNGKAGGRITFMVGPHAPYTCPPDALQACAELADELGVGIHIHLSETRDEVEEARRNWGKSPIRHVYDLGLMKGRHVVAAHCVHVDDDDIAILAETGTGVCHCPVSNLKLASGRTPVAKMRRKGVAVGFGTDGASSENMLHILGSEMRIGAIQAKELEGDPAVYTAYDAVAMATIEAARVLGMESEIGSLEPGKKADLILIDAERPHLTPNHDVFALIAYSALPGDVVMTIVDGRIVYEDGRLTTMDGREIMARVREAAARLVRE.

His-66 and His-68 together coordinate Zn(2+). 4 residues coordinate substrate: Glu-95, Arg-147, Arg-161, and His-187. His-214 is a binding site for Zn(2+). Substrate contacts are provided by Glu-217 and Asp-303. A Zn(2+)-binding site is contributed by Asp-303.

This sequence belongs to the metallo-dependent hydrolases superfamily. MTA/SAH deaminase family. Requires Zn(2+) as cofactor.

The enzyme catalyses S-adenosyl-L-homocysteine + H2O + H(+) = S-inosyl-L-homocysteine + NH4(+). It carries out the reaction S-methyl-5'-thioadenosine + H2O + H(+) = S-methyl-5'-thioinosine + NH4(+). In terms of biological role, catalyzes the deamination of 5-methylthioadenosine and S-adenosyl-L-homocysteine into 5-methylthioinosine and S-inosyl-L-homocysteine, respectively. Is also able to deaminate adenosine. This Symbiobacterium thermophilum (strain DSM 24528 / JCM 14929 / IAM 14863 / T) protein is 5-methylthioadenosine/S-adenosylhomocysteine deaminase.